Here is a 1377-residue protein sequence, read N- to C-terminus: DNA-directed RNA polymerase subunit beta' (1377 aa).

Residues C60, C62, C75, and C78 each contribute to the Zn(2+) site. Mg(2+)-binding residues include D449, D451, and D453. Residues C777, C851, C858, and C861 each coordinate Zn(2+).

It belongs to the RNA polymerase beta' chain family. As to quaternary structure, the RNAP catalytic core consists of 2 alpha, 1 beta, 1 beta' and 1 omega subunit. When a sigma factor is associated with the core the holoenzyme is formed, which can initiate transcription. The cofactor is Mg(2+). Zn(2+) is required as a cofactor.

The catalysed reaction is RNA(n) + a ribonucleoside 5'-triphosphate = RNA(n+1) + diphosphate. Functionally, DNA-dependent RNA polymerase catalyzes the transcription of DNA into RNA using the four ribonucleoside triphosphates as substrates. This Borrelia turicatae (strain 91E135) protein is DNA-directed RNA polymerase subunit beta'.